The sequence spans 77 residues: Teretoxin Tsu15.4 (77 aa).

Positions 1-21 are cleaved as a signal peptide; the sequence is MTKLTVLLLAILVLLPLATSN. The propeptide occupies 22 to 40; that stretch reads SAADEALASLSGLLRRAKR.

In terms of processing, contains 4 disulfide bonds. In terms of tissue distribution, expressed by the venom duct.

It localises to the secreted. This chain is Teretoxin Tsu15.4, found in Terebra subulata (Chocolate spotted auger).